Consider the following 1257-residue polypeptide: MGAESVWASGLLVLWLLLLVSGDQDTQDTTTTEKGLHMLKSGSGPIQAALAELVALPCFFTLQPRQSPLGDIPRIKWTKVQTASGQRQDLPILVAKDNVVRVAKGWQGRVSLPAYPRHRANATLLLGPLRASDSGLYRCQVVKGIEDEQDLVTLEVTGVVFHYRAARDRYALTFAEAQEACHLSSATIAAPRHLQAAFEDGFDNCDAGWLSDRTVRYPITQSRPGCYGDRSSLPGVRSYGRRDPQELYDVYCFARELGGEVFYVGPARRLTLAGARALCQRQGAALASVGQLHLAWHEGLDQCDPGWLADGSVRYPIQTPRRRCGGSAPGVRTVYRFANRTGFPAPGARFDAYCFRAHHHTPQRGDSEIPSSGDEGEIVSAEGPPAPELKPRLGEQEVITPDFQEPLVSSGEDEPLDLTRTQASQETLASTPGGPTLASWLLTGVTSSTGVPSPSSLGVDMEETTPSGTQVAPTPTMRRGRFKGLNGRHFQQQGPEDQLLEAAEASAQPPTLEVTADHMGPSAATEALESDQSHSPWAILTNEVDVPGAGSLGSRSLPESRKWSPSLISPSTVPSTDSTPGLKPGADEAPGVKSAIHHPPWLPSEPAVPSSIPSEALSAVSLQASPGDGSPDFPIVAMLRAPKLWLLPHSTLVPNVSPIPLSPASPLPSSVPEEQAVRPVSFGAEDPETPFQTTMAAPGEASHGSPEADSIEIEGISSMQATKHPISGPWASLDSSNVTVNPVPSDAGILGTESGVLDLPGSPTSDGQATVDMVLATWLPLPGHGLDTGSQSTPMEAHGVTMSVEPTVALEGGATKDPMEATMDVVPSTVDATSGSEPKSSISSTHVVVTAAGDQGTPTLTPTSSEGQVVAQESLGTLTSLPSHPWSSLASSMDEVASVSSGEPTRLWDIPSTLIPVSLGLDESDLKVVAESPGLEGFWEEVASGQEDPTDPCENNPCLHGGTCRTNGTMYGCSCDQGYAGENCEIDIDDCLCSPCENGGTCIDEVNGFICLCLPSYGGNLCEKDTEGCDRGWHKFQGHCYRYFAHRRAWEDAERDCRRRAGHLTSVHSPEEHKFINSFGHENSWIGLNDRTVERDFQWTDNTGLQYENWREKQPDNFFAGGEDCVVMVAHENGRWNDVPCNYNLPYVCKKGTVLCGPPPAVENASLVGVRKVKYNVHATVRYQCDEGFSQHHVATIRCRSNGKWDRPQIVCTKPRRSHRMRRHHHHPHRHHKPRKEHRKHKRHPAEDWEKDEGDFC.

Positions Met1–Gly22 are cleaved as a signal peptide. Positions His37–Thr157 constitute an Ig-like V-type domain. 5 disulfides stabilise this stretch: Cys58–Cys139, Cys181–Cys252, Cys205–Cys226, Cys279–Cys354, and Cys303–Cys324. Asn121 carries an N-linked (GlcNAc...) asparagine glycan. Link domains are found at residues Val159 to Ala254 and Gly258 to Arg356. Asn339 carries an N-linked (GlcNAc...) asparagine glycan. The segment at Thr361 to Pro391 is disordered. O-linked (Xyl...) (chondroitin sulfate) serine glycans are attached at residues Ser380 and Ser410. Residues Ser447–Val459 are compositionally biased toward low complexity. 3 disordered regions span residues Ser447 to Gln493, Gly550 to Ser610, and Gly683 to Glu707. Residues Thr464–Pro473 show a composition bias toward polar residues. Low complexity predominate over residues Ser569 to Pro580. Asn737 carries an N-linked (GlcNAc...) asparagine glycan. Ser944 carries O-linked (Xyl...) (chondroitin sulfate) serine glycosylation. In terms of domain architecture, EGF-like 1 spans Pro949–Glu985. Intrachain disulfides connect Cys953-Cys964, Cys958-Cys973, Cys975-Cys984, Cys991-Cys1002, Cys996-Cys1011, Cys1013-Cys1022, Cys1029-Cys1040, Cys1057-Cys1149, Cys1125-Cys1141, Cys1156-Cys1199, and Cys1185-Cys1212. An N-linked (GlcNAc...) asparagine glycan is attached at Asn967. Positions Asp987 to Glu1023 constitute an EGF-like 2; calcium-binding domain. The 130-residue stretch at Asp1025–Val1154 folds into the C-type lectin domain. The region spanning Val1154–Lys1214 is the Sushi domain. Residue Asn1164 is glycosylated (N-linked (GlcNAc...) asparagine). The segment covering Pro1215–His1244 has biased composition (basic residues). The interval Pro1215–Cys1257 is disordered.

The protein belongs to the aggrecan/versican proteoglycan family. In terms of processing, two isoforms were found that probably arise by proteolytic processing. The large isoform is predominant in early postnatal brain, the small isoform is found in adult brain. O-glycosylated; contains chondroitin sulfate. In terms of tissue distribution, early postnatal and adult brain; not expressed in kidney, lung, liver and muscle.

The protein resides in the secreted. May modulate neuronal adhesion and neurite growth during development by binding to neural cell adhesion molecules (NG-CAM and N-CAM). Chondroitin sulfate proteoglycan; binds to hyaluronic acid. This chain is Neurocan core protein (Ncan), found in Rattus norvegicus (Rat).